Here is a 65-residue protein sequence, read N- to C-terminus: uncharacterized protein (65 aa).

Residues Met-1 to Arg-30 form a disordered region. The span at Leu-10–Arg-23 shows a compositional bias: pro residues.

This is an uncharacterized protein from Homo sapiens (Human).